Consider the following 685-residue polypeptide: Protein DIA2 (685 aa).

TPR repeat units follow at residues 6-39, 70-103, and 104-137; these read IDRS…ARSY, LVLL…DAYN, and LKGY…AGEA. An F-box domain is found at 207-254; sequence IDYIATLPVEIIERIMANMDTRSIIRCYSVCKLWKYRLERLPHLYQEF. LRR repeat units follow at residues 300–323, 353–377, 454–480, 499–517, 518–542, 562–585, and 598–622; these read ILLL…CKAE, KLNL…NFHT, MPNL…IVQV, FDRM…LREV, FQSL…LLQP, ARDL…LLPN, and RKNI…GYEL.

The protein belongs to the DIA2 family. In terms of assembly, forms a SCF ubiquitin ligase complex which binds to DNA replication origins.

It localises to the nucleus. In terms of biological role, F-box protein component of a SCF ubiquitin ligase complex involved in ubiquitin-dependent protein degradation. The SCF-DIA2 complex is specifically involved in the pheromone induced degradation of phosphorylated TEC1. Involved in DNA replication, genome stability, and the control of cell cycle, probably through its association to replication origins to facilitate the ubiquitination of another origin-binding protein. The polypeptide is Protein DIA2 (DIA2) (Eremothecium gossypii (strain ATCC 10895 / CBS 109.51 / FGSC 9923 / NRRL Y-1056) (Yeast)).